A 248-amino-acid polypeptide reads, in one-letter code: 2,3-bisphosphoglycerate-dependent phosphoglycerate mutase (248 aa).

Substrate-binding positions include 8–15 (RHGESLWN), 21–22 (TG), Arg60, 87–90 (ERHY), Lys98, 114–115 (RR), and 183–184 (GN). His9 functions as the Tele-phosphohistidine intermediate in the catalytic mechanism. Residue Glu87 is the Proton donor/acceptor of the active site.

Belongs to the phosphoglycerate mutase family. BPG-dependent PGAM subfamily.

The enzyme catalyses (2R)-2-phosphoglycerate = (2R)-3-phosphoglycerate. The protein operates within carbohydrate degradation; glycolysis; pyruvate from D-glyceraldehyde 3-phosphate: step 3/5. In terms of biological role, catalyzes the interconversion of 2-phosphoglycerate and 3-phosphoglycerate. The sequence is that of 2,3-bisphosphoglycerate-dependent phosphoglycerate mutase from Methanospirillum hungatei JF-1 (strain ATCC 27890 / DSM 864 / NBRC 100397 / JF-1).